A 145-amino-acid chain; its full sequence is Lysozyme-like protein 4 (145 aa).

Positions 1–19 (MKASVVLSLIGYLVVPSDT) are cleaved as a signal peptide. The region spanning 20-145 (AVLGRCVVAK…LARWLDGCKL (126 aa)) is the C-type lysozyme domain. 4 disulfides stabilise this stretch: cysteine 25-cysteine 143, cysteine 49-cysteine 130, cysteine 84-cysteine 95, and cysteine 91-cysteine 109. Glutamate 54 is a catalytic residue.

It belongs to the glycosyl hydrolase 22 family. As to quaternary structure, monomer.

Its subcellular location is the secreted. The protein resides in the cytoplasmic vesicle. It localises to the secretory vesicle. The protein localises to the acrosome. It is found in the cell projection. Its subcellular location is the cilium. The protein resides in the flagellum. May be involved in fertilization. Has no detectable bacteriolytic and lysozyme activities in vitro. This is Lysozyme-like protein 4 (LYZL4) from Bos taurus (Bovine).